An 89-amino-acid chain; its full sequence is Small ribosomal subunit protein uS14 (89 aa).

Belongs to the universal ribosomal protein uS14 family. As to quaternary structure, part of the 30S ribosomal subunit. Contacts proteins S3 and S10.

Functionally, binds 16S rRNA, required for the assembly of 30S particles and may also be responsible for determining the conformation of the 16S rRNA at the A site. This Onion yellows phytoplasma (strain OY-M) protein is Small ribosomal subunit protein uS14.